Consider the following 358-residue polypeptide: Alanine racemase (358 aa).

Catalysis depends on lysine 34, which acts as the Proton acceptor; specific for D-alanine. The residue at position 34 (lysine 34) is an N6-(pyridoxal phosphate)lysine. Residue arginine 130 participates in substrate binding. Catalysis depends on tyrosine 254, which acts as the Proton acceptor; specific for L-alanine. Methionine 302 lines the substrate pocket.

The protein belongs to the alanine racemase family. Pyridoxal 5'-phosphate serves as cofactor.

The enzyme catalyses L-alanine = D-alanine. It participates in amino-acid biosynthesis; D-alanine biosynthesis; D-alanine from L-alanine: step 1/1. Functionally, catalyzes the interconversion of L-alanine and D-alanine. May also act on other amino acids. This is Alanine racemase (alr) from Actinobacillus succinogenes (strain ATCC 55618 / DSM 22257 / CCUG 43843 / 130Z).